Here is a 197-residue protein sequence, read N- to C-terminus: Imidazoleglycerol-phosphate dehydratase (197 aa).

It belongs to the imidazoleglycerol-phosphate dehydratase family.

It is found in the cytoplasm. It carries out the reaction D-erythro-1-(imidazol-4-yl)glycerol 3-phosphate = 3-(imidazol-4-yl)-2-oxopropyl phosphate + H2O. The protein operates within amino-acid biosynthesis; L-histidine biosynthesis; L-histidine from 5-phospho-alpha-D-ribose 1-diphosphate: step 6/9. This chain is Imidazoleglycerol-phosphate dehydratase, found in Bradyrhizobium sp. (strain BTAi1 / ATCC BAA-1182).